Here is a 1395-residue protein sequence, read N- to C-terminus: DNA polymerase II large subunit (1395 aa).

Disordered stretches follow at residues Ile-279–Glu-320 and Gly-657–Thr-704. Residues Glu-283–Glu-312 are compositionally biased toward acidic residues. 2 stretches are compositionally biased toward basic and acidic residues: residues Gly-661 to Leu-671 and Asp-690 to Asp-700.

It belongs to the archaeal DNA polymerase II family. Heterodimer of a large subunit and a small subunit. In terms of processing, this protein undergoes a protein self splicing that involves a post-translational excision of the intervening region (intein) followed by peptide ligation.

It catalyses the reaction DNA(n) + a 2'-deoxyribonucleoside 5'-triphosphate = DNA(n+1) + diphosphate. It carries out the reaction Exonucleolytic cleavage in the 3'- to 5'-direction to yield nucleoside 5'-phosphates.. In terms of biological role, possesses two activities: a DNA synthesis (polymerase) and an exonucleolytic activity that degrades single-stranded DNA in the 3'- to 5'-direction. Has a template-primer preference which is characteristic of a replicative DNA polymerase. This Haloarcula marismortui (strain ATCC 43049 / DSM 3752 / JCM 8966 / VKM B-1809) (Halobacterium marismortui) protein is DNA polymerase II large subunit.